Reading from the N-terminus, the 79-residue chain is Sulfur carrier protein TusA (79 aa).

Residue Cys17 is the Cysteine persulfide intermediate of the active site.

The protein belongs to the sulfur carrier protein TusA family.

The protein localises to the cytoplasm. Functionally, sulfur carrier protein which probably makes part of a sulfur-relay system. This Pasteurella multocida (strain Pm70) protein is Sulfur carrier protein TusA.